A 289-amino-acid chain; its full sequence is Zinc finger matrin-type protein 3 (289 aa).

Positions 1–42 are disordered; that stretch reads MILLQHAVLPPPKQPSPSPPMSVATRSTGTLQLPPQKPFGQE. The span at 9–20 shows a compositional bias: pro residues; sequence LPPPKQPSPSPP. Over residues 24-33 the composition is skewed to polar residues; it reads ATRSTGTLQL. Matrin-type zinc fingers lie at residues 70 to 100 and 147 to 177; these read LYCK…KLRN and DYCK…RLRL. Over residues 180 to 191 the composition is skewed to polar residues; that stretch reads AQSNSFSESSEL. The segment at 180–201 is disordered; the sequence is AQSNSFSESSELGQRRARKEGN. The Matrin-type 3 zinc-finger motif lies at 246 to 276; it reads FYCSMCNVGAGEEMEFRQHLESKQHKSKVSE.

As to quaternary structure, interacts with dsRNA. In terms of tissue distribution, highly expressed in adult brain, and moderately in adult kidney and testis. Not detected in fetal brain, heart, pancreas, adrenal gland, liver or small intestine.

It is found in the nucleus. The protein localises to the nucleolus. Its function is as follows. Acts as a bona fide target gene of p53/TP53. May play a role in the TP53-dependent growth regulatory pathway. May contribute to TP53-mediated apoptosis by regulation of TP53 expression and translocation to the nucleus and nucleolus. This Homo sapiens (Human) protein is Zinc finger matrin-type protein 3.